We begin with the raw amino-acid sequence, 232 residues long: Large ribosomal subunit protein uL1 (232 aa).

Belongs to the universal ribosomal protein uL1 family. In terms of assembly, part of the 50S ribosomal subunit.

Functionally, binds directly to 23S rRNA. The L1 stalk is quite mobile in the ribosome, and is involved in E site tRNA release. Protein L1 is also a translational repressor protein, it controls the translation of the L11 operon by binding to its mRNA. This Colwellia psychrerythraea (strain 34H / ATCC BAA-681) (Vibrio psychroerythus) protein is Large ribosomal subunit protein uL1.